A 148-amino-acid chain; its full sequence is uncharacterized protein (148 aa).

One can recognise an HTH asnC-type domain in the interval 2–63; sequence LDELDKRILY…LINPFKAGYE (62 aa). Residues 21-40 constitute a DNA-binding region (H-T-H motif); that stretch reads YSEIARILGVPESTVRVRVK.

This is an uncharacterized protein from Pyrococcus furiosus (strain ATCC 43587 / DSM 3638 / JCM 8422 / Vc1).